The following is a 470-amino-acid chain: MGSGRVRVRFAPSPTGIFHVGGARSALFNWLVARRAGGDFVLRVEDTDASRNRPEWTDGIISALDWLGISPGGYEGPVLQSSRADRHRAAAERLHAEGLAYYCDCTREALAERTGNAQRGYDGFCRDRGLAPGPGRALRFRTPDDGVTIVEDLIRGTPEFPNETIEDFVVARADGSAVFLLANVVDDLEMGITHVIRGEEHLSNTPKQQLLWAALGADAPPVWAHVPVIVNEKRQKLSKRRDKVALESYRDEGYLPAAMKNYLMLLGWAPPGEDEIVPWETIESTFDLADVKPSPAFFDEKKLKAFNGEYIRRLSVAEFIEAVRPWLSAPAAPWEPAAFDADAFAALAPLAQSRVSVLSEIVPMVDFLFLPEAPIDDAAWAKAMKGPAAELLADVHDLYDKIEWEAETLKAGLTEVGERHGLKLGKAQAPVRVAVTGRSVGLPLFESLEALGRETTLRRLAEARERLTGG.

The short motif at 12–22 is the 'HIGH' region element; that stretch reads PSPTGIFHVGG. Zn(2+) is bound by residues C103, C105, C125, and D127. The 'KMSKS' region motif lies at 236–240; sequence KLSKR. An ATP-binding site is contributed by K239.

The protein belongs to the class-I aminoacyl-tRNA synthetase family. Glutamate--tRNA ligase type 1 subfamily. In terms of assembly, monomer. Zn(2+) is required as a cofactor.

It is found in the cytoplasm. It catalyses the reaction tRNA(Glu) + L-glutamate + ATP = L-glutamyl-tRNA(Glu) + AMP + diphosphate. Catalyzes the attachment of glutamate to tRNA(Glu) in a two-step reaction: glutamate is first activated by ATP to form Glu-AMP and then transferred to the acceptor end of tRNA(Glu). The sequence is that of Glutamate--tRNA ligase from Frankia casuarinae (strain DSM 45818 / CECT 9043 / HFP020203 / CcI3).